Consider the following 578-residue polypeptide: Arginine--tRNA ligase (578 aa).

A 'HIGH' region motif is present at residues 127–137 (PNLAKEMHVGH).

The protein belongs to the class-I aminoacyl-tRNA synthetase family. In terms of assembly, monomer.

Its subcellular location is the cytoplasm. It carries out the reaction tRNA(Arg) + L-arginine + ATP = L-arginyl-tRNA(Arg) + AMP + diphosphate. The protein is Arginine--tRNA ligase of Pseudomonas entomophila (strain L48).